The sequence spans 343 residues: Dihydroorotate dehydrogenase (quinone) (343 aa).

FMN-binding positions include 61-65 (AGLDK) and Thr85. Lys65 serves as a coordination point for substrate. 110-114 (NRMGF) provides a ligand contact to substrate. FMN is bound by residues Asn138 and Asn171. Substrate is bound at residue Asn171. The active-site Nucleophile is Ser174. Asn176 contributes to the substrate binding site. FMN is bound by residues Lys216 and Thr244. 245 to 246 (NT) provides a ligand contact to substrate. Residues Gly267, Gly296, and 317–318 (YS) contribute to the FMN site.

The protein belongs to the dihydroorotate dehydrogenase family. Type 2 subfamily. Monomer. It depends on FMN as a cofactor.

It is found in the cell membrane. The catalysed reaction is (S)-dihydroorotate + a quinone = orotate + a quinol. Its pathway is pyrimidine metabolism; UMP biosynthesis via de novo pathway; orotate from (S)-dihydroorotate (quinone route): step 1/1. In terms of biological role, catalyzes the conversion of dihydroorotate to orotate with quinone as electron acceptor. This is Dihydroorotate dehydrogenase (quinone) from Pseudomonas syringae pv. syringae (strain B728a).